We begin with the raw amino-acid sequence, 487 residues long: Glutamyl-tRNA(Gln) amidotransferase subunit A (487 aa).

Active-site charge relay system residues include K77 and S152. The Acyl-ester intermediate role is filled by S176.

Belongs to the amidase family. GatA subfamily. Heterotrimer of A, B and C subunits.

It catalyses the reaction L-glutamyl-tRNA(Gln) + L-glutamine + ATP + H2O = L-glutaminyl-tRNA(Gln) + L-glutamate + ADP + phosphate + H(+). Allows the formation of correctly charged Gln-tRNA(Gln) through the transamidation of misacylated Glu-tRNA(Gln) in organisms which lack glutaminyl-tRNA synthetase. The reaction takes place in the presence of glutamine and ATP through an activated gamma-phospho-Glu-tRNA(Gln). The sequence is that of Glutamyl-tRNA(Gln) amidotransferase subunit A from Lactiplantibacillus plantarum (strain ATCC BAA-793 / NCIMB 8826 / WCFS1) (Lactobacillus plantarum).